A 487-amino-acid chain; its full sequence is Glutamate--tRNA ligase (487 aa).

Positions 13–23 match the 'HIGH' region motif; it reads PSPTGLFHIGG. The 'KMSKS' region motif lies at 255 to 259; that stretch reads KLSKR. ATP is bound at residue Lys258.

It belongs to the class-I aminoacyl-tRNA synthetase family. Glutamate--tRNA ligase type 1 subfamily. Monomer.

The protein resides in the cytoplasm. It carries out the reaction tRNA(Glu) + L-glutamate + ATP = L-glutamyl-tRNA(Glu) + AMP + diphosphate. In terms of biological role, catalyzes the attachment of glutamate to tRNA(Glu) in a two-step reaction: glutamate is first activated by ATP to form Glu-AMP and then transferred to the acceptor end of tRNA(Glu). The protein is Glutamate--tRNA ligase of Malacoplasma penetrans (strain HF-2) (Mycoplasma penetrans).